Consider the following 230-residue polypeptide: Peptidyl-prolyl cis-trans isomerase FKBP16-4, chloroplastic (230 aa).

Residues 1–56 (MILTMKLVHPLHHSLSSSIPFPSRKRQSKPYRCSLPSPGCEKVIRTETVLPPAPVS) constitute a chloroplast transit peptide. Positions 123-217 (GSRVAVHYVA…ELDIELLSIK (95 aa)) constitute a PPIase FKBP-type domain.

It belongs to the FKBP-type PPIase family.

The protein resides in the plastid. It localises to the chloroplast thylakoid lumen. The catalysed reaction is [protein]-peptidylproline (omega=180) = [protein]-peptidylproline (omega=0). In terms of biological role, PPIases accelerate the folding of proteins. It catalyzes the cis-trans isomerization of proline imidic peptide bonds in oligopeptides. The chain is Peptidyl-prolyl cis-trans isomerase FKBP16-4, chloroplastic (FKBP16-4) from Arabidopsis thaliana (Mouse-ear cress).